The chain runs to 518 residues: MVHVRRHETRKNSKTQKPEQKSRVDWHRTKRSISQLFDSDEELDSNEELDSDEEHDSGESIDSDEELDISKKSDINELPEKETELKLIKVESQGSNSKHLTNTSNSSADEEQLKETKHNDLPDDEAHPGQAENHHNRHTGQILEEDMEDEYIKPGKRKRLSSVMYDSDESDDSDILIRKASAKHPRRVVEDECSSLEMEQETPEKSSAARKREYHQKLQELSERSRQRRRRNSGRNFEDSEKDSCSGTGEEDEDEDEDDYRYDEDGDDYMIDDFVVRNEEGDDENSNQQGENLTTSQLKLVKQNSLYSFSDHYTHFERVVKALLINAFDESFLETLYAGTRKKSYAKDMLTSLHYLDNRFIQPRLESLVSRSRWKEQYKERVESYSNLNILSKSPENCVCQACGLHRHCKFSVHLSGKLYNIRTMETDDFMSHDKQVFTVGRICVERTRIYHKLKHFKFKLYQDCCLIAKPEEVGDEQVKDTVKRVFNHSKERGWIRKKYDQLQNFLNSADYFQDEKF.

A compositionally biased stretch (basic residues) spans M1–K14. A disordered region spans residues M1–G266. A compositionally biased stretch (basic and acidic residues) spans Q16 to H27. The segment covering D38–L67 has biased composition (acidic residues). Residues D68–K89 show a composition bias toward basic and acidic residues. The span at S92–S107 shows a compositional bias: polar residues. A compositionally biased stretch (basic and acidic residues) spans E111–H127. Phosphoserine occurs at positions 170 and 194. Residues D191–E201 are compositionally biased toward acidic residues. T202 is subject to Phosphothreonine. Positions E204 to N232 form a coiled coil. Over residues H215–S225 the composition is skewed to basic and acidic residues. The span at G249 to G266 shows a compositional bias: acidic residues. Phosphoserine is present on S305.

This is Coiled-coil domain-containing protein 82 (Ccdc82) from Mus musculus (Mouse).